We begin with the raw amino-acid sequence, 336 residues long: Fructose-1,6-bisphosphatase class 1 (336 aa).

Positions 90, 112, 114, and 115 each coordinate Mg(2+). Substrate contacts are provided by residues Asp115–Ser118, Asn211, and Lys277. Glu283 contacts Mg(2+).

Belongs to the FBPase class 1 family. In terms of assembly, homotetramer. Mg(2+) serves as cofactor.

The protein resides in the cytoplasm. The enzyme catalyses beta-D-fructose 1,6-bisphosphate + H2O = beta-D-fructose 6-phosphate + phosphate. Its pathway is carbohydrate biosynthesis; gluconeogenesis. This Pseudomonas savastanoi pv. phaseolicola (strain 1448A / Race 6) (Pseudomonas syringae pv. phaseolicola (strain 1448A / Race 6)) protein is Fructose-1,6-bisphosphatase class 1.